We begin with the raw amino-acid sequence, 493 residues long: Glutamyl-tRNA(Gln) amidotransferase subunit A (493 aa).

Catalysis depends on charge relay system residues K79 and S159. The active-site Acyl-ester intermediate is the S183.

The protein belongs to the amidase family. GatA subfamily. Heterotrimer of A, B and C subunits.

The enzyme catalyses L-glutamyl-tRNA(Gln) + L-glutamine + ATP + H2O = L-glutaminyl-tRNA(Gln) + L-glutamate + ADP + phosphate + H(+). In terms of biological role, allows the formation of correctly charged Gln-tRNA(Gln) through the transamidation of misacylated Glu-tRNA(Gln) in organisms which lack glutaminyl-tRNA synthetase. The reaction takes place in the presence of glutamine and ATP through an activated gamma-phospho-Glu-tRNA(Gln). This chain is Glutamyl-tRNA(Gln) amidotransferase subunit A, found in Brucella anthropi (strain ATCC 49188 / DSM 6882 / CCUG 24695 / JCM 21032 / LMG 3331 / NBRC 15819 / NCTC 12168 / Alc 37) (Ochrobactrum anthropi).